Here is a 235-residue protein sequence, read N- to C-terminus: Secretory carrier-associated membrane protein 5A (235 aa).

The Cytoplasmic segment spans residues 1-39 (MSDKPNNFPPLPRFIPLKPCFYQDFDTDIPDLHRTTAKR). A helical transmembrane segment spans residues 40 to 60 (LYYLWMLNSITLGVNLIGCLA). Residues 61-67 (WLIGGGS) lie on the Extracellular side of the membrane. The chain crosses the membrane as a helical span at residues 68-88 (ATNFGLAFLWLILFTPCSYVC). The Cytoplasmic segment spans residues 89–102 (WFRPIYKAFKTDSS). A helical membrane pass occupies residues 103–125 (FNFMAFFFTFTAQLVISIIQAVG). The Extracellular portion of the chain corresponds to 126–148 (IPGWGVCGWIASISFFGTNVGSA). A helical transmembrane segment spans residues 149 to 169 (VVMLIPTIMFTAVAVLSFVAL). The Cytoplasmic segment spans residues 170 to 235 (TKVHRFYRGA…TPNYGYSNEM (66 aa)).

This sequence belongs to the SCAMP family. SCAMP5 subfamily.

The protein localises to the cell membrane. It is found in the golgi apparatus membrane. The protein resides in the golgi apparatus. Its subcellular location is the trans-Golgi network membrane. It localises to the recycling endosome membrane. The protein localises to the cytoplasmic vesicle. It is found in the secretory vesicle. The protein resides in the synaptic vesicle membrane. In terms of biological role, required for the calcium-dependent exocytosis of signal sequence-containing cytokines. Probably acts in cooperation with the SNARE machinery. The sequence is that of Secretory carrier-associated membrane protein 5A (scamp5-a) from Xenopus laevis (African clawed frog).